Consider the following 255-residue polypeptide: BPI fold-containing family A member 1 (255 aa).

A signal peptide spans 1–19 (MFHIGSLVVLCGLLAPTTA). The interval 87-92 (LLGSLL) is important for surfactant activity and antibacterial properties. Asn157, Asn178, and Asn205 each carry an N-linked (GlcNAc...) asparagine glycan. A disulfide bridge links Cys179 with Cys223.

It belongs to the BPI/LBP/Plunc superfamily. Plunc family. Monomer. Interacts (via N-terminus) with SCNN1B, a subunit of the heterotrimeric epithelial sodium channel (ENaC); this inhibits proteolytic activation of ENaC. As to expression, expressed in trachea, and at lower levels in nasal epithelium.

It is found in the secreted. Lipid-binding protein which shows high specificity for the surfactant phospholipid dipalmitoylphosphatidylcholine (DPPC). Plays a role in the innate immune responses of the upper airways. Reduces the surface tension in secretions from airway epithelia and inhibits the formation of biofilm by pathogenic Gram-negative bacteria, such as P.aeruginosa and K.pneumoniae. Negatively regulates proteolytic cleavage of SCNN1G, an event that is required for activation of the epithelial sodium channel (ENaC), and thereby contributes to airway surface liquid homeostasis and proper clearance of mucus. Plays a role in the airway inflammatory response after exposure to irritants. May attract macrophages and neutrophils. In Bos taurus (Bovine), this protein is BPI fold-containing family A member 1 (BPIFA1).